A 166-amino-acid chain; its full sequence is Peptidoglycan-associated lipoprotein (166 aa).

The N-terminal stretch at 1–21 (MEMLKFGKFAALALAMAVAVG) is a signal peptide. C22 is lipidated: N-palmitoyl cysteine. A lipid anchor (S-diacylglycerol cysteine) is attached at C22. The OmpA-like domain maps to 54 to 166 (SEEAALRAIT…AQNRRVELRK (113 aa)). A disordered region spans residues 147–166 (VATGNDEQSWAQNRRVELRK).

This sequence belongs to the Pal lipoprotein family. As to quaternary structure, the Tol-Pal system is composed of five core proteins: the inner membrane proteins TolA, TolQ and TolR, the periplasmic protein TolB and the outer membrane protein Pal. They form a network linking the inner and outer membranes and the peptidoglycan layer.

It is found in the cell outer membrane. In terms of biological role, part of the Tol-Pal system, which plays a role in outer membrane invagination during cell division and is important for maintaining outer membrane integrity. The protein is Peptidoglycan-associated lipoprotein of Pseudomonas putida (Arthrobacter siderocapsulatus).